Consider the following 102-residue polypeptide: MAKGQSLQDPFLNALRRERVPVSIYLVNGIKLQGQIESFDQFVILLKNTVSQMVYKHAISTVVPSRPVSHHSNNASGGTSSNYHHGSSAQNTSAQQDSEETE.

One can recognise a Sm domain in the interval 9 to 68 (DPFLNALRRERVPVSIYLVNGIKLQGQIESFDQFVILLKNTVSQMVYKHAISTVVPSRPV). The segment at 63–102 (VPSRPVSHHSNNASGGTSSNYHHGSSAQNTSAQQDSEETE) is disordered. The span at 70 to 96 (HHSNNASGGTSSNYHHGSSAQNTSAQQ) shows a compositional bias: polar residues.

The protein belongs to the Hfq family. Homohexamer.

In terms of biological role, RNA chaperone that binds small regulatory RNA (sRNAs) and mRNAs to facilitate mRNA translational regulation in response to envelope stress, environmental stress and changes in metabolite concentrations. Also binds with high specificity to tRNAs. The sequence is that of RNA-binding protein Hfq from Shigella boydii serotype 18 (strain CDC 3083-94 / BS512).